We begin with the raw amino-acid sequence, 300 residues long: Eukaryotic translation initiation factor 3 subunit F (300 aa).

The MPN domain occupies 33–169; that stretch reads VKVHPVALFS…VQCYVSALLG (137 aa).

Belongs to the eIF-3 subunit F family. As to quaternary structure, component of the eukaryotic translation initiation factor 3 (eIF-3) complex.

It is found in the cytoplasm. In terms of biological role, component of the eukaryotic translation initiation factor 3 (eIF-3) complex, which is involved in protein synthesis of a specialized repertoire of mRNAs and, together with other initiation factors, stimulates binding of mRNA and methionyl-tRNAi to the 40S ribosome. The eIF-3 complex specifically targets and initiates translation of a subset of mRNAs involved in cell proliferation. This Malassezia globosa (strain ATCC MYA-4612 / CBS 7966) (Dandruff-associated fungus) protein is Eukaryotic translation initiation factor 3 subunit F.